The following is a 93-amino-acid chain: Large ribosomal subunit protein eL31 (93 aa).

This sequence belongs to the eukaryotic ribosomal protein eL31 family.

This chain is Large ribosomal subunit protein eL31, found in Methanosarcina mazei (strain ATCC BAA-159 / DSM 3647 / Goe1 / Go1 / JCM 11833 / OCM 88) (Methanosarcina frisia).